Here is a 779-residue protein sequence, read N- to C-terminus: Aconitate hydratase, mitochondrial (779 aa).

Residues Met1–Gln28 constitute a mitochondrion transit peptide. Substrate-binding positions include Gln97 and Asp190–His192. Residues Cys383, Cys446, and Cys449 each contribute to the [4Fe-4S] cluster site. Residues Arg472, Arg477, Arg605, and Ser668 to Arg669 each bind substrate.

Belongs to the aconitase/IPM isomerase family. As to quaternary structure, monomer. The cofactor is [4Fe-4S] cluster.

Its subcellular location is the mitochondrion. The enzyme catalyses citrate = D-threo-isocitrate. It participates in carbohydrate metabolism; tricarboxylic acid cycle; isocitrate from oxaloacetate: step 2/2. Its function is as follows. Catalyzes the isomerization of citrate to isocitrate via cis-aconitate. The polypeptide is Aconitate hydratase, mitochondrial (Gracilaria gracilis (Red alga)).